A 330-amino-acid chain; its full sequence is tRNA U34 carboxymethyltransferase (330 aa).

Residues K91, W105, K110, G130, 152-154, 181-182, M196, Y200, and R315 contribute to the carboxy-S-adenosyl-L-methionine site; these read DPS and IE.

This sequence belongs to the class I-like SAM-binding methyltransferase superfamily. CmoB family. In terms of assembly, homotetramer.

It carries out the reaction carboxy-S-adenosyl-L-methionine + 5-hydroxyuridine(34) in tRNA = 5-carboxymethoxyuridine(34) in tRNA + S-adenosyl-L-homocysteine + H(+). Catalyzes carboxymethyl transfer from carboxy-S-adenosyl-L-methionine (Cx-SAM) to 5-hydroxyuridine (ho5U) to form 5-carboxymethoxyuridine (cmo5U) at position 34 in tRNAs. This Shewanella woodyi (strain ATCC 51908 / MS32) protein is tRNA U34 carboxymethyltransferase.